A 558-amino-acid polypeptide reads, in one-letter code: Energy-dependent translational throttle protein EttA (558 aa).

2 consecutive ABC transporter domains span residues Y6–G256 and V322–H552. G38–S45 is an ATP binding site. The interval G94–D136 is arm. Positions G239–V320 are ptIM. G354–T361 lines the ATP pocket.

This sequence belongs to the ABC transporter superfamily. ABCF family. Translational throttle EttA subfamily. As to quaternary structure, monomer. Probably contacts ribosomal proteins L1, L5, L33 and S7, the 16S and 23S rRNA and the P-site containing tRNA(fMet).

The protein localises to the cytoplasm. The catalysed reaction is ATP + H2O = ADP + phosphate + H(+). Its function is as follows. A translation factor that gates the progression of the 70S ribosomal initiation complex (IC, containing tRNA(fMet) in the P-site) into the translation elongation cycle by using a mechanism sensitive to the ATP/ADP ratio. Binds to the 70S ribosome E-site where it modulates the state of the translating ribosome during subunit translocation. ATP hydrolysis probably frees it from the ribosome, which can enter the elongation phase. The polypeptide is Energy-dependent translational throttle protein EttA (Mycobacterium tuberculosis (strain CDC 1551 / Oshkosh)).